A 339-amino-acid polypeptide reads, in one-letter code: Phenylalanine--tRNA ligase alpha subunit (339 aa).

Mg(2+) is bound at residue Glu-262.

This sequence belongs to the class-II aminoacyl-tRNA synthetase family. Phe-tRNA synthetase alpha subunit type 1 subfamily. As to quaternary structure, tetramer of two alpha and two beta subunits. Mg(2+) is required as a cofactor.

Its subcellular location is the cytoplasm. It carries out the reaction tRNA(Phe) + L-phenylalanine + ATP = L-phenylalanyl-tRNA(Phe) + AMP + diphosphate + H(+). This chain is Phenylalanine--tRNA ligase alpha subunit, found in Neisseria gonorrhoeae (strain ATCC 700825 / FA 1090).